An 850-amino-acid polypeptide reads, in one-letter code: Trimethylguanosine synthase (850 aa).

Residues 54–85 (NNAGDRVTEEEEDDHSSGTTESHSADEGDLDP) form a disordered region. At T61 the chain carries Phosphothreonine. Phosphoserine occurs at positions 92 and 152. Disordered regions lie at residues 278–311 (DQNA…DNDH), 327–454 (EVEQ…GGIP), and 523–566 (ISQE…PENC). A compositionally biased stretch (basic and acidic residues) spans 363-374 (TPKESDISENRS). Positions 375–390 (SDQPAQELQESSGTNT) are enriched in polar residues. 2 positions are modified to phosphoserine: S405 and S431. Over residues 424–435 (DIDENPDSEVDD) the composition is skewed to acidic residues. Over residues 548–562 (SMEKTDGLMETRDPE) the composition is skewed to basic and acidic residues. S571 is modified (phosphoserine). Residues 595-628 (TEGVANSPRAEAEVEIKKKKKKKKKNKNKKINGL) are disordered. Over residues 611-624 (KKKKKKKKKNKNKK) the composition is skewed to basic residues. Position 713 (D713) interacts with S-adenosyl-L-methionine.

Belongs to the methyltransferase superfamily. Trimethylguanosine synthase family. As to quaternary structure, may form homooligomers. Interacts with CREBBP/CBP, EED/WAIT1, EP300/P300, NCOA6/PRIP, PPARBP/PBP and SMN. In terms of tissue distribution, a 55 kDa isoform is widely expressed while a 90 kDa isoform is detected exclusively in brain and testis (at protein level).

It localises to the cytoplasm. Its subcellular location is the nucleus. The protein localises to the cajal body. It is found in the nucleolus. The enzyme catalyses a 5'-end (N(7)-methyl 5'-triphosphoguanosine)-ribonucleoside in snRNA + S-adenosyl-L-methionine = a 5'-end (N(2),N(7)-dimethyl 5'-triphosphoguanosine)-ribonucleoside in snRNA + S-adenosyl-L-homocysteine + H(+). The catalysed reaction is a 5'-end (N(7)-methyl 5'-triphosphoguanosine)-ribonucleoside in snoRNA + S-adenosyl-L-methionine = a 5'-end (N(2),N(7)-dimethyl 5'-triphosphoguanosine)-ribonucleoside in snoRNA + S-adenosyl-L-homocysteine + H(+). It carries out the reaction a 5'-end (N(2),N(7)-dimethyl 5'-triphosphoguanosine)-ribonucleoside in snRNA + S-adenosyl-L-methionine = a 5'-end (N(2),N(2),N(7)-trimethyl 5'-triphosphoguanosine)-ribonucleoside in snRNA + S-adenosyl-L-homocysteine + H(+). It catalyses the reaction a 5'-end (N(2),N(7)-dimethyl 5'-triphosphoguanosine)-ribonucleoside in snoRNA + S-adenosyl-L-methionine = a 5'-end (N(2),N(2),N(7)-trimethyl 5'-triphosphoguanosine)-ribonucleoside in snoRNA + S-adenosyl-L-homocysteine + H(+). Functionally, catalyzes the 2 serial methylation steps for the conversion of the 7-monomethylguanosine (m(7)G) caps of snRNAs and snoRNAs to a 2,2,7-trimethylguanosine (m(2,2,7)G) cap structure. The enzyme is specific for guanine, and N7 methylation must precede N2 methylation. Hypermethylation of the m7G cap of U snRNAs leads to their concentration in nuclear foci, their colocalization with coilin and the formation of canonical Cajal bodies (CBs). Plays a role in transcriptional regulation. This is Trimethylguanosine synthase from Rattus norvegicus (Rat).